Here is a 494-residue protein sequence, read N- to C-terminus: Tripartite motif-containing protein 5 (494 aa).

N-acetylalanine is present on Ala-2. The RING-type zinc finger occupies Cys-15–Arg-59. Residue Ser-86 is modified to Phosphoserine. The segment at Gln-91–Val-132 adopts a B box-type zinc-finger fold. Positions 96, 99, 118, and 124 each coordinate Zn(2+). A coiled-coil region spans residues Val-132 to Val-223. The required for interaction with GABARAP and for autophagy stretch occupies residues Phe-186–Lys-199. One can recognise a B30.2/SPRY domain in the interval Pro-280–Ser-494.

The protein belongs to the TRIM/RBCC family. Can form homodimers and homotrimers. In addition to lower-order dimerization, also exhibits a higher-order multimerization and both low- and high-order multimerizations are essential for its restriction activity. Interacts with BTBD1 and BTBD2. Interacts with PSMC4, PSMC5, PSMD7 and HSPA8/HSC70. Interacts (via B30.2/SPRY domain) with HSPA1A/B. Interacts with PSMC2, MAP3K7/TAK1, TAB2 and TAB3. Interacts with SQSTM1. Interacts with TRIM6 and TRIM34. Interacts with ULK1 (phosphorylated form), GABARAP, GABARAPL1, GABARAPL2, MAP1LC3A, MAP1LC3C and BECN1. In terms of processing, degraded in a proteasome-independent fashion in the absence of viral infection but in a proteasome-dependent fashion following exposure to restriction sensitive virus. Autoubiquitinated in a RING finger- and UBE2D2-dependent manner. Monoubiquitinated by TRIM21. Deubiquitinated by Yersinia YopJ. Ubiquitination may not lead to proteasomal degradation.

The protein localises to the cytoplasm. It is found in the nucleus. The catalysed reaction is S-ubiquitinyl-[E2 ubiquitin-conjugating enzyme]-L-cysteine + [acceptor protein]-L-lysine = [E2 ubiquitin-conjugating enzyme]-L-cysteine + N(6)-ubiquitinyl-[acceptor protein]-L-lysine.. Its pathway is protein modification; protein ubiquitination. Capsid-specific restriction factor that prevents infection from non-host-adapted retroviruses. Blocks viral replication early in the life cycle, after viral entry but before reverse transcription. In addition to acting as a capsid-specific restriction factor, also acts as a pattern recognition receptor that activates innate immune signaling in response to the retroviral capsid lattice. Binding to the viral capsid triggers its E3 ubiquitin ligase activity, and in concert with the heterodimeric ubiquitin conjugating enzyme complex UBE2V1-UBE2N (also known as UBC13-UEV1A complex) generates 'Lys-63'-linked polyubiquitin chains, which in turn are catalysts in the autophosphorylation of the MAP3K7/TAK1 complex (includes TAK1, TAB2, and TAB3). Activation of the MAP3K7/TAK1 complex by autophosphorylation results in the induction and expression of NF-kappa-B and MAPK-responsive inflammatory genes, thereby leading to an innate immune response in the infected cell. Plays a role in regulating autophagy through activation of autophagy regulator BECN1 by causing its dissociation from its inhibitors BCL2 and TAB2. In Cebuella pygmaea (Pygmy marmoset), this protein is Tripartite motif-containing protein 5 (TRIM5).